Here is a 208-residue protein sequence, read N- to C-terminus: uncharacterized protein (208 aa).

The N-terminal stretch at 1–16 (MTRVALLTTGRELSQA) is a signal peptide. 2 disordered regions span residues 1-95 (MTRV…VRGQ) and 145-176 (RVTK…SAAD). Residues 16–25 (AAPPARARTP) are compositionally biased toward low complexity. Positions 32–43 (RGERPDDGGHAP) are enriched in basic and acidic residues. The span at 44–54 (HRDRRVNQRRR) shows a compositional bias: basic residues. Residues 55–95 (QVGDRRAQRGVDEHPWRRPDERPNDHLPQRNSERPEGVRGQ) are compositionally biased toward basic and acidic residues. Polar residues-rich tracts occupy residues 148–158 (KVSSSGPNSTP) and 167–176 (GTNNAPSAAD).

This is an uncharacterized protein from Mycobacterium tuberculosis (strain CDC 1551 / Oshkosh).